Consider the following 104-residue polypeptide: Large ribosomal subunit protein bL21 (104 aa).

The protein belongs to the bacterial ribosomal protein bL21 family. Part of the 50S ribosomal subunit. Contacts protein L20.

This protein binds to 23S rRNA in the presence of protein L20. The chain is Large ribosomal subunit protein bL21 from Caldanaerobacter subterraneus subsp. tengcongensis (strain DSM 15242 / JCM 11007 / NBRC 100824 / MB4) (Thermoanaerobacter tengcongensis).